Consider the following 33-residue polypeptide: MEALVYTFLLVSTLGIIFFAIFFREPPKVPTKK.

Residues 3-23 form a helical membrane-spanning segment; it reads ALVYTFLLVSTLGIIFFAIFF.

This sequence belongs to the PsbT family. In terms of assembly, PSII is composed of 1 copy each of membrane proteins PsbA, PsbB, PsbC, PsbD, PsbE, PsbF, PsbH, PsbI, PsbJ, PsbK, PsbL, PsbM, PsbT, PsbY, PsbZ, Psb30/Ycf12, at least 3 peripheral proteins of the oxygen-evolving complex and a large number of cofactors. It forms dimeric complexes.

It localises to the plastid. Its subcellular location is the chloroplast thylakoid membrane. Found at the monomer-monomer interface of the photosystem II (PS II) dimer, plays a role in assembly and dimerization of PSII. PSII is a light-driven water plastoquinone oxidoreductase, using light energy to abstract electrons from H(2)O, generating a proton gradient subsequently used for ATP formation. This is Photosystem II reaction center protein T from Asparagus officinalis (Garden asparagus).